The primary structure comprises 332 residues: Holliday junction branch migration complex subunit RuvB (332 aa).

The large ATPase domain (RuvB-L) stretch occupies residues 1–181 (MARILDNNVM…FGITGHMEYY (181 aa)). ATP is bound by residues Leu20, Arg21, Gly62, Lys65, Thr66, Thr67, 128–130 (EDF), Arg171, Tyr181, and Arg218. Thr66 is a binding site for Mg(2+). Positions 182-252 (QEKDLTEIVE…ITDRALTMLD (71 aa)) are small ATPAse domain (RuvB-S). The interval 255–332 (REGLNYIDQK…RHLGYPYQNT (78 aa)) is head domain (RuvB-H). The DNA site is built by Arg291, Arg310, Arg312, and Arg315.

Belongs to the RuvB family. As to quaternary structure, homohexamer. Forms an RuvA(8)-RuvB(12)-Holliday junction (HJ) complex. HJ DNA is sandwiched between 2 RuvA tetramers; dsDNA enters through RuvA and exits via RuvB. An RuvB hexamer assembles on each DNA strand where it exits the tetramer. Each RuvB hexamer is contacted by two RuvA subunits (via domain III) on 2 adjacent RuvB subunits; this complex drives branch migration. In the full resolvosome a probable DNA-RuvA(4)-RuvB(12)-RuvC(2) complex forms which resolves the HJ.

The protein resides in the cytoplasm. The catalysed reaction is ATP + H2O = ADP + phosphate + H(+). Its function is as follows. The RuvA-RuvB-RuvC complex processes Holliday junction (HJ) DNA during genetic recombination and DNA repair, while the RuvA-RuvB complex plays an important role in the rescue of blocked DNA replication forks via replication fork reversal (RFR). RuvA specifically binds to HJ cruciform DNA, conferring on it an open structure. The RuvB hexamer acts as an ATP-dependent pump, pulling dsDNA into and through the RuvAB complex. RuvB forms 2 homohexamers on either side of HJ DNA bound by 1 or 2 RuvA tetramers; 4 subunits per hexamer contact DNA at a time. Coordinated motions by a converter formed by DNA-disengaged RuvB subunits stimulates ATP hydrolysis and nucleotide exchange. Immobilization of the converter enables RuvB to convert the ATP-contained energy into a lever motion, pulling 2 nucleotides of DNA out of the RuvA tetramer per ATP hydrolyzed, thus driving DNA branch migration. The RuvB motors rotate together with the DNA substrate, which together with the progressing nucleotide cycle form the mechanistic basis for DNA recombination by continuous HJ branch migration. Branch migration allows RuvC to scan DNA until it finds its consensus sequence, where it cleaves and resolves cruciform DNA. This Streptococcus pyogenes serotype M18 (strain MGAS8232) protein is Holliday junction branch migration complex subunit RuvB.